The primary structure comprises 118 residues: Non-specific lipid-transfer protein 3 (118 aa).

A signal peptide spans 1 to 25; the sequence is MARSMNLACVALVMCMVVIAPMAEA. 4 cysteine pairs are disulfide-bonded: Cys29–Cys76, Cys39–Cys53, Cys54–Cys99, and Cys74–Cys113.

This sequence belongs to the plant LTP family.

In terms of biological role, plant non-specific lipid-transfer proteins transfer phospholipids as well as galactolipids across membranes. May play a role in wax or cutin deposition in the cell walls of expanding epidermal cells and certain secretory tissues. This Lens culinaris (Lentil) protein is Non-specific lipid-transfer protein 3.